The following is a 106-amino-acid chain: MICOS complex subunit MIC12 (106 aa).

Residues 11 to 27 (VKWTLSVGVIGSVFYLY) traverse the membrane as a helical segment.

The protein belongs to the MICOS complex subunit Mic12 family. As to quaternary structure, component of the mitochondrial contact site and cristae organizing system (MICOS) complex.

The protein resides in the mitochondrion inner membrane. Component of the MICOS complex, a large protein complex of the mitochondrial inner membrane that plays crucial roles in the maintenance of crista junctions, inner membrane architecture, and formation of contact sites to the outer membrane. This is MICOS complex subunit MIC12 (AIM5) from Saccharomyces cerevisiae (strain RM11-1a) (Baker's yeast).